The sequence spans 215 residues: Eukaryotic translation initiation factor 4E-1A (215 aa).

Positions 1-14 (MATAEPETSTNPSN) are enriched in low complexity. The interval 1 to 23 (MATAEPETSTNPSNSEEKNEENE) is disordered. MRNA is bound by residues 54–55 (WQ), 100–101 (WE), 155–160 (RTKGDK), and 203–205 (TKS).

This sequence belongs to the eukaryotic initiation factor 4E family. Interacts with eif4ebp3l. As to expression, expressed in all tissues examined, including gill, fin, heart, intestine, muscle, ovary and testis.

It localises to the cytoplasm. The protein localises to the nucleus. Recognizes and binds the 7-methylguanosine (m7G)-containing mRNA cap during an early step in the initiation of protein synthesis and facilitates ribosome binding by inducing the unwinding of the mRNAs secondary structures. Also promotes export of a subset of mRNAs from the nucleus to the cytoplasm. The polypeptide is Eukaryotic translation initiation factor 4E-1A (Danio rerio (Zebrafish)).